The chain runs to 445 residues: MATTILKNEGLDFHIKISTPLSEIDNDIQKELVDLTKKVKIAGFRAGKVPIAIVEKKYGASVRNDIIEKRINDSVNHVIKEHNLNIIGRPKIDDLQNEPNKPLEFTIKMELLPKIDIPDLKKISINRPKLEVSPDDVEEQLKKLAEMMKSYTKESKAKAKDGDQITMDAVGYVKDEAFEGGKLTDFKVVIGSNALIPGFEKQLIGSKAGSEVEVNVTFPENYHAKDLAGKDARFVVQVKAVHTAEPTVIDDEFAKKFQSNSLEELRTHFTKKIENESEEAISTIMKMNLFDQLEKLLDFDVPESLLDQEKNILKSETDKSEQDDSVFKDKSPEQVKEYYDKLALRRVRIGLMLAEYAKDKNLQVEPDDLRRIIMQQARSFPGQENMLFDFYKNNPRAVEQLKGPALEEKAVQHIFDNAVNLKEKKYNRKELEKLLESEEQRITAM.

Positions 162-247 constitute a PPIase FKBP-type domain; it reads GDQITMDAVG…VKAVHTAEPT (86 aa).

Belongs to the FKBP-type PPIase family. Tig subfamily.

Its subcellular location is the cytoplasm. The enzyme catalyses [protein]-peptidylproline (omega=180) = [protein]-peptidylproline (omega=0). Its function is as follows. Involved in protein export. Acts as a chaperone by maintaining the newly synthesized protein in an open conformation. Functions as a peptidyl-prolyl cis-trans isomerase. The protein is Trigger factor of Rickettsia bellii (strain OSU 85-389).